A 122-amino-acid chain; its full sequence is Large ribosomal subunit protein uL14 (122 aa).

It belongs to the universal ribosomal protein uL14 family. In terms of assembly, part of the 50S ribosomal subunit. Forms a cluster with proteins L3 and L19. In the 70S ribosome, L14 and L19 interact and together make contacts with the 16S rRNA in bridges B5 and B8.

In terms of biological role, binds to 23S rRNA. Forms part of two intersubunit bridges in the 70S ribosome. This Flavobacterium johnsoniae (strain ATCC 17061 / DSM 2064 / JCM 8514 / BCRC 14874 / CCUG 350202 / NBRC 14942 / NCIMB 11054 / UW101) (Cytophaga johnsonae) protein is Large ribosomal subunit protein uL14.